Consider the following 102-residue polypeptide: Small ribosomal subunit protein uS10 (102 aa).

This sequence belongs to the universal ribosomal protein uS10 family. Part of the 30S ribosomal subunit.

In terms of biological role, involved in the binding of tRNA to the ribosomes. The polypeptide is Small ribosomal subunit protein uS10 (Exiguobacterium sp. (strain ATCC BAA-1283 / AT1b)).